We begin with the raw amino-acid sequence, 487 residues long: Phosphoglucosamine mutase (487 aa).

The active-site Phosphoserine intermediate is Ser-134. 4 residues coordinate Mg(2+): Ser-134, Asp-277, Asp-279, and Asp-281. Ser-134 is modified (phosphoserine).

Belongs to the phosphohexose mutase family. The cofactor is Mg(2+). In terms of processing, activated by phosphorylation.

The catalysed reaction is alpha-D-glucosamine 1-phosphate = D-glucosamine 6-phosphate. Its function is as follows. Catalyzes the conversion of glucosamine-6-phosphate to glucosamine-1-phosphate. This Gloeothece citriformis (strain PCC 7424) (Cyanothece sp. (strain PCC 7424)) protein is Phosphoglucosamine mutase.